A 141-amino-acid polypeptide reads, in one-letter code: Small ribosomal subunit protein bS6 (141 aa).

Residues 96–141 form a disordered region; that stretch reads VTGQSEMLKAEENRSERRERRERPEHADSAEGDDSNDSDSSDNADE. Basic and acidic residues predominate over residues 103–124; that stretch reads LKAEENRSERRERRERPEHADS. Residues 125–141 are compositionally biased toward acidic residues; that stretch reads AEGDDSNDSDSSDNADE.

The protein belongs to the bacterial ribosomal protein bS6 family.

Binds together with bS18 to 16S ribosomal RNA. The sequence is that of Small ribosomal subunit protein bS6 from Pseudomonas putida (strain ATCC 700007 / DSM 6899 / JCM 31910 / BCRC 17059 / LMG 24140 / F1).